A 570-amino-acid chain; its full sequence is MSEKHPGPLVVEGKLTDAERMKLESNYLRGTIAEDLNDGLTGGFKGDNFLLIRFHGMYQQDDRDIRAERAEQKLEPRHAMLLRCRLPGGVITTKQWQAIDKFAGENTIYGSIRLTNRQTFQFHGILKKNVKPVHQMLHSVGLDALATANDMNRNVLCTSNPYESQLHAEAYEWAKKISEHLLPRTRAYAEIWLDQEKVATTDEEPILGQTYLPRKFKTTVVIPPQNDIDLHANDMNFVAIAENGKLVGFNLLVGGGLSIEHGNKKTYARTASEFGYLPLEHTLAVAEAVVTTQRDWGNRTDRKNAKTKYTLERVGVETFKAEVERRAGIKFEPIRPYEFTGRGDRIGWVKGIDDNWHLTLFIENGRILDYPGRPLKTGLLEIAKIHKGDFRITANQNLIIAGVPESEKAKIEKIAKESGLMNAVTPQRENSMACVSFPTCPLAMAEAERFLPSFIDNIDNLMAKHGVSDEHIVMRVTGCPNGCGRAMLAEVGLVGKAPGRYNLHLGGNRIGTRIPRMYKENITEPEILASLDELIGRWAKEREAGEGFGDFTVRAGIIRPVLDPARDLWD.

[4Fe-4S] cluster is bound by residues cysteine 434, cysteine 440, cysteine 479, and cysteine 483. Cysteine 483 contributes to the siroheme binding site.

It belongs to the nitrite and sulfite reductase 4Fe-4S domain family. Alpha(8)-beta(8). The alpha component is a flavoprotein, the beta component is a hemoprotein. Siroheme serves as cofactor. Requires [4Fe-4S] cluster as cofactor.

The catalysed reaction is hydrogen sulfide + 3 NADP(+) + 3 H2O = sulfite + 3 NADPH + 4 H(+). It participates in sulfur metabolism; hydrogen sulfide biosynthesis; hydrogen sulfide from sulfite (NADPH route): step 1/1. In terms of biological role, component of the sulfite reductase complex that catalyzes the 6-electron reduction of sulfite to sulfide. This is one of several activities required for the biosynthesis of L-cysteine from sulfate. The chain is Sulfite reductase [NADPH] hemoprotein beta-component from Escherichia coli O17:K52:H18 (strain UMN026 / ExPEC).